The chain runs to 243 residues: Vesicle-associated membrane protein-associated protein B/C (243 aa).

Ala-2 carries the N-acetylalanine modification. Residues 2 to 222 (AKVEQVLSLE…PTGKEEGLST (221 aa)) lie on the Cytoplasmic side of the membrane. The MSP domain occupies 7-124 (VLSLEPQHEL…MDSKLRCVFE (118 aa)). At Ser-146 the chain carries Phosphoserine. Residue Lys-147 forms a Glycyl lysine isopeptide (Lys-Gly) (interchain with G-Cter in SUMO1) linkage. Thr-150 is subject to Phosphothreonine. A phosphoserine mark is found at Ser-156, Ser-158, Ser-159, Ser-160, and Ser-206. Positions 159-196 (SSLDDTEVKKVMEECKRLQGEVQRLREENKQFKEEDGL) form a coiled coil. The helical; Anchor for type IV membrane protein transmembrane segment at 223–243 (RLLALVVLFFIVGVIIGKIAL) threads the bilayer.

The protein belongs to the VAMP-associated protein (VAP) (TC 9.B.17) family. In terms of assembly, homodimer, and heterodimer with VAPA. Interacts with VAMP1 and VAMP2. Interacts (via MSP domain) with ZFYVE27. Interacts with RMDN3. Interacts with KIF5A in a ZFYVE27-dependent manner. Interacts (via MSP domain) with STARD3 (via phospho-FFAT motif). Interacts with STARD3NL (via FFAT motif). Interacts with CERT1. Interacts with PLEKHA3 and SACM1L to form a ternary complex. Interacts with VPS13A (via FFAT motif). Interacts with RB1CC1 (via phosphorylated FFAT motif), MIGA2 (via phosphorylated FFAT motif), RMDN3 (via phosphorylated FFAT motif), OSBPL1A (via FFAT motif), KCNB1 (via phosphorylated FFAT motif) and KCNB2 (via phosphorylated FFAT motif). Interacts (via MSP domain) with WDR44 (via FFAT motif); the interactions connect the endoplasmic reticulum (ER) with the endosomal tubule. (Microbial infection) Interacts (via MSP domain) with hepatitis C virus (HCV) non-structural protein 5A (via disordered domain D3). Interacts with HCV RNA-directed RNA polymerase. As to expression, ubiquitous. Isoform 1 predominates.

It is found in the endoplasmic reticulum membrane. Its function is as follows. Endoplasmic reticulum (ER)-anchored protein that mediates the formation of contact sites between the ER and endosomes via interaction with FFAT motif-containing proteins such as STARD3 or WDR44. Interacts with STARD3 in a FFAT motif phosphorylation dependent manner. Via interaction with WDR44 participates in neosynthesized protein export. Participates in the endoplasmic reticulum unfolded protein response (UPR) by inducing ERN1/IRE1 activity. Involved in cellular calcium homeostasis regulation. The sequence is that of Vesicle-associated membrane protein-associated protein B/C from Homo sapiens (Human).